The primary structure comprises 264 residues: Undecaprenyl-diphosphatase (264 aa).

8 helical membrane passes run 1 to 21 (MDLIHVVVLALIQGITEFLPI), 39 to 59 (QGLAFDVAVHVGTLTAVAVYF), 87 to 107 (WYLIAATIPAALFGLIFDDLI), 111 to 131 (LRSTDVIATTTLVFGVLLWVA), 144 to 164 (IALSTAMIIGLAQAVALIPGT), 187 to 207 (FSFLLSIPVIVLSGGYKGLQL), 208 to 228 (VLSAAAVDWLAIGLGIALSAV), and 244 to 264 (IGMLPFVIYRLLLGVLLFIAV).

The protein belongs to the UppP family.

The protein localises to the cell inner membrane. It carries out the reaction di-trans,octa-cis-undecaprenyl diphosphate + H2O = di-trans,octa-cis-undecaprenyl phosphate + phosphate + H(+). Functionally, catalyzes the dephosphorylation of undecaprenyl diphosphate (UPP). Confers resistance to bacitracin. This Teredinibacter turnerae (strain ATCC 39867 / T7901) protein is Undecaprenyl-diphosphatase.